Reading from the N-terminus, the 371-residue chain is Envelope glycoprotein M (371 aa).

The Intravirion portion of the chain corresponds to 1 to 13; sequence MAPSHVDKVNTRT. Residues 14 to 34 traverse the membrane as a helical segment; sequence WSASIVFMVLTFVNVSVHLVL. Residues 35–79 lie on the Virion surface side of the membrane; the sequence is SNFPHLGYPCVYYHVVDFERLNMSAYNVMHLHTPMLFLDSVQLVC. Residues 80–100 form a helical membrane-spanning segment; that stretch reads YAVFMQLVFLAVTIYYLVCWI. Topologically, residues 101–126 are intravirion; it reads KISMRKDKGMSLNQSTRDISYMGDSL. The chain crosses the membrane as a helical span at residues 127 to 147; sequence TAFLFILSMDTFQLFTLTMSF. Over 148–151 the chain is Virion surface; that stretch reads RLPS. The chain crosses the membrane as a helical span at residues 152–172; sequence MIAFMAAVHFFCLTIFNVSMV. At 173–200 the chain is on the intravirion side; that stretch reads TQYRSYKRSLFFFSRLHPKLKGTVQFRT. Residues 201–221 form a helical membrane-spanning segment; that stretch reads LIVNLVEVALGFNTTVVAMAL. Residues 222–239 lie on the Virion surface side of the membrane; it reads CYGFGNNFFVRTGHMVLA. A helical membrane pass occupies residues 240-260; sequence VFVVYAIISIIYFLLIEAVFF. Residues 261-264 are Intravirion-facing; the sequence is QYVK. The chain crosses the membrane as a helical span at residues 265–285; it reads VQFGYHLGAFFGLCGLIYPIV. At 286-298 the chain is on the virion surface side; that stretch reads QYDTFLSNEYRTG. A helical transmembrane segment spans residues 299–319; sequence ISWSFGMLFFIWAMFTTCRAV. The Intravirion portion of the chain corresponds to 320 to 371; it reads RYFRGRGSGSVKYQALATASGEEVAALSHHDSLESRRLREEEDDDDEDFEDA. The tract at residues 346–371 is disordered; sequence LSHHDSLESRRLREEEDDDDEDFEDA. The segment covering 347–359 has biased composition (basic and acidic residues); it reads SHHDSLESRRLRE. Positions 360–371 are enriched in acidic residues; that stretch reads EEDDDDEDFEDA.

This sequence belongs to the herpesviridae glycoprotein M family. In terms of assembly, interacts (via N-terminus) with gN (via N-terminus). The gM-gN heterodimer forms the gCII complex.

It localises to the virion membrane. It is found in the host Golgi apparatus. The protein resides in the host trans-Golgi network. The protein localises to the host endosome membrane. Its subcellular location is the host nucleus inner membrane. Functionally, envelope glycoprotein important for virion assembly and egress. Plays a role in the correct incorporation of gH-gL into virion membrane. Directs the glycoprotein N (gN) to the host trans-Golgi network. The sequence is that of Envelope glycoprotein M from Homo sapiens (Human).